We begin with the raw amino-acid sequence, 196 residues long: Protein GrpE (196 aa).

The interval Met-1 to Asp-41 is disordered.

It belongs to the GrpE family. As to quaternary structure, homodimer.

It localises to the cytoplasm. Participates actively in the response to hyperosmotic and heat shock by preventing the aggregation of stress-denatured proteins, in association with DnaK and GrpE. It is the nucleotide exchange factor for DnaK and may function as a thermosensor. Unfolded proteins bind initially to DnaJ; upon interaction with the DnaJ-bound protein, DnaK hydrolyzes its bound ATP, resulting in the formation of a stable complex. GrpE releases ADP from DnaK; ATP binding to DnaK triggers the release of the substrate protein, thus completing the reaction cycle. Several rounds of ATP-dependent interactions between DnaJ, DnaK and GrpE are required for fully efficient folding. This chain is Protein GrpE, found in Klebsiella pneumoniae subsp. pneumoniae (strain ATCC 700721 / MGH 78578).